A 408-amino-acid chain; its full sequence is Imidazolonepropionase (408 aa).

Residues H73 and H75 each coordinate Fe(3+). 2 residues coordinate Zn(2+): H73 and H75. The 4-imidazolone-5-propanoate site is built by R82, Y145, and H178. Residue Y145 coordinates N-formimidoyl-L-glutamate. H243 provides a ligand contact to Fe(3+). H243 serves as a coordination point for Zn(2+). Q246 serves as a coordination point for 4-imidazolone-5-propanoate. D318 serves as a coordination point for Fe(3+). D318 contacts Zn(2+). Residues N320 and G322 each coordinate N-formimidoyl-L-glutamate. Residue S323 coordinates 4-imidazolone-5-propanoate.

It belongs to the metallo-dependent hydrolases superfamily. HutI family. Zn(2+) serves as cofactor. Fe(3+) is required as a cofactor.

Its subcellular location is the cytoplasm. The enzyme catalyses 4-imidazolone-5-propanoate + H2O = N-formimidoyl-L-glutamate. It functions in the pathway amino-acid degradation; L-histidine degradation into L-glutamate; N-formimidoyl-L-glutamate from L-histidine: step 3/3. Functionally, catalyzes the hydrolytic cleavage of the carbon-nitrogen bond in imidazolone-5-propanoate to yield N-formimidoyl-L-glutamate. It is the third step in the universal histidine degradation pathway. In Shewanella baltica (strain OS185), this protein is Imidazolonepropionase.